A 234-amino-acid polypeptide reads, in one-letter code: tRNA1(Val) (adenine(37)-N6)-methyltransferase (234 aa).

The protein belongs to the methyltransferase superfamily. tRNA (adenine-N(6)-)-methyltransferase family.

Its subcellular location is the cytoplasm. The catalysed reaction is adenosine(37) in tRNA1(Val) + S-adenosyl-L-methionine = N(6)-methyladenosine(37) in tRNA1(Val) + S-adenosyl-L-homocysteine + H(+). Functionally, specifically methylates the adenine in position 37 of tRNA(1)(Val) (anticodon cmo5UAC). In Phocaeicola vulgatus (strain ATCC 8482 / DSM 1447 / JCM 5826 / CCUG 4940 / NBRC 14291 / NCTC 11154) (Bacteroides vulgatus), this protein is tRNA1(Val) (adenine(37)-N6)-methyltransferase.